A 207-amino-acid chain; its full sequence is Large ribosomal subunit protein uL4 (207 aa).

A disordered region spans residues 45 to 78; it reads RQGTHKTKNRAEVSGGGRKPWRQKGTGRARQGSI.

This sequence belongs to the universal ribosomal protein uL4 family. Part of the 50S ribosomal subunit.

Functionally, one of the primary rRNA binding proteins, this protein initially binds near the 5'-end of the 23S rRNA. It is important during the early stages of 50S assembly. It makes multiple contacts with different domains of the 23S rRNA in the assembled 50S subunit and ribosome. Forms part of the polypeptide exit tunnel. This is Large ribosomal subunit protein uL4 from Geobacillus sp. (strain WCH70).